Consider the following 434-residue polypeptide: Adenylosuccinate synthetase (434 aa).

GTP contacts are provided by residues 22 to 28 (GDEGKGK) and 50 to 52 (GHT). Asp-23 serves as the catalytic Proton acceptor. 2 residues coordinate Mg(2+): Asp-23 and Gly-50. IMP contacts are provided by residues 23 to 26 (DEGK), 48 to 51 (NAGH), Thr-139, Arg-153, Gln-234, Thr-249, and Arg-313. His-51 serves as the catalytic Proton donor. 309-315 (ATTGRKR) contacts substrate. Residues Arg-315, 341 to 343 (KLD), and 423 to 425 (SVG) each bind GTP.

This sequence belongs to the adenylosuccinate synthetase family. Homodimer. Requires Mg(2+) as cofactor.

The protein localises to the cytoplasm. It catalyses the reaction IMP + L-aspartate + GTP = N(6)-(1,2-dicarboxyethyl)-AMP + GDP + phosphate + 2 H(+). It participates in purine metabolism; AMP biosynthesis via de novo pathway; AMP from IMP: step 1/2. Functionally, plays an important role in the de novo pathway of purine nucleotide biosynthesis. Catalyzes the first committed step in the biosynthesis of AMP from IMP. The protein is Adenylosuccinate synthetase of Chlorobium limicola (strain DSM 245 / NBRC 103803 / 6330).